The chain runs to 187 residues: Dirigent protein 6 (187 aa).

The first 29 residues, 1 to 29, serve as a signal peptide directing secretion; that stretch reads MAFLVEKQLFKALFSFFLLVLLFSDTVLS. Cysteines 40 and 186 form a disulfide. Asn-59 and Asn-123 each carry an N-linked (GlcNAc...) asparagine glycan.

This sequence belongs to the plant dirigent protein family. Homodimer. Expressed in roots, cotyledon veins, leaf trichomes, flowers, siliques, and meristems. Present in interfascicular/vascular cambia and developing xylem.

The protein localises to the secreted. Its subcellular location is the extracellular space. It localises to the apoplast. In terms of biological role, dirigent proteins impart stereoselectivity on the phenoxy radical-coupling reaction, yielding optically active lignans from two molecules of coniferyl alcohol in the biosynthesis of lignans, flavonolignans, and alkaloids and thus plays a central role in plant secondary metabolism. Enantiocomplementary dirigent protein that mediates the laccase-catalyzed enantioselective oxidative phenol coupling of (E)-coniferyl alcohol to (-)-pinoresinol. The polypeptide is Dirigent protein 6 (DIR6) (Arabidopsis thaliana (Mouse-ear cress)).